Here is a 345-residue protein sequence, read N- to C-terminus: Aspartate--ammonia ligase (345 aa).

It belongs to the class-II aminoacyl-tRNA synthetase family. AsnA subfamily.

It localises to the cytoplasm. The enzyme catalyses L-aspartate + NH4(+) + ATP = L-asparagine + AMP + diphosphate + H(+). It functions in the pathway amino-acid biosynthesis; L-asparagine biosynthesis; L-asparagine from L-aspartate (ammonia route): step 1/1. This is Aspartate--ammonia ligase from Bacteroides fragilis (strain ATCC 25285 / DSM 2151 / CCUG 4856 / JCM 11019 / LMG 10263 / NCTC 9343 / Onslow / VPI 2553 / EN-2).